The following is a 240-amino-acid chain: LexA repressor (240 aa).

A DNA-binding region (H-T-H motif) is located at residues 26-46 (FDEMKDALDLASKSGIHRLIT). The interval 78–113 (QPRRGFSPSVIEGSLGKPQPVQPPAPAKPANDENNS) is disordered. Active-site for autocatalytic cleavage activity residues include serine 160 and lysine 198.

The protein belongs to the peptidase S24 family. As to quaternary structure, homodimer.

The enzyme catalyses Hydrolysis of Ala-|-Gly bond in repressor LexA.. Its function is as follows. Represses a number of genes involved in the response to DNA damage (SOS response), including recA and lexA. In the presence of single-stranded DNA, RecA interacts with LexA causing an autocatalytic cleavage which disrupts the DNA-binding part of LexA, leading to derepression of the SOS regulon and eventually DNA repair. This is LexA repressor from Rhizobium rhizogenes (strain K84 / ATCC BAA-868) (Agrobacterium radiobacter).